We begin with the raw amino-acid sequence, 317 residues long: Apolipoprotein E (317 aa).

The signal sequence occupies residues Met1–Ala18. 8 tandem repeats follow at residues Val80–Gly101, Pro102–Ala123, Ser124–Gly145, His146–Leu167, Arg168–Glu189, Arg190–Ala211, Thr212–Arg233, and Gly234–Asp255. Residues Val80–Asp255 are 8 X 22 AA approximate tandem repeats. Position 143 is a methionine sulfoxide (Met143). Positions His158–Arg168 are LDL and other lipoprotein receptors binding. Residue Leu162–Arg165 coordinates heparin. Residues Ala210–Met290 are lipid-binding and lipoprotein association. A heparin-binding site is contributed by His229–Val236. Positions Thr266–His317 are homooligomerization. Positions Arg278 to Met290 are specificity for association with VLDL.

It belongs to the apolipoprotein A1/A4/E family. As to quaternary structure, homotetramer. May interact with ABCA1; functionally associated with ABCA1 in the biogenesis of HDLs. May interact with APP/A4 amyloid-beta peptide; the interaction is extremely stable in vitro but its physiological significance is unclear. May interact with MAPT. May interact with MAP2. In the cerebrospinal fluid, interacts with secreted SORL1. Interacts with PMEL; this allows the loading of PMEL luminal fragment on ILVs to induce fibril nucleation. APOE exists as multiple glycosylated and sialylated glycoforms within cells and in plasma. The extent of glycosylation and sialylation are tissue and context specific. In terms of processing, glycated in plasma VLDL. Post-translationally, phosphorylated by FAM20C in the extracellular medium.

The protein resides in the secreted. It localises to the extracellular space. Its subcellular location is the extracellular matrix. It is found in the extracellular vesicle. The protein localises to the endosome. The protein resides in the multivesicular body. In terms of biological role, APOE is an apolipoprotein, a protein associating with lipid particles, that mainly functions in lipoprotein-mediated lipid transport between organs via the plasma and interstitial fluids. APOE is a core component of plasma lipoproteins and is involved in their production, conversion and clearance. Apolipoproteins are amphipathic molecules that interact both with lipids of the lipoprotein particle core and the aqueous environment of the plasma. As such, APOE associates with chylomicrons, chylomicron remnants, very low density lipoproteins (VLDL) and intermediate density lipoproteins (IDL) but shows a preferential binding to high-density lipoproteins (HDL). It also binds a wide range of cellular receptors including the LDL receptor/LDLR and the very low-density lipoprotein receptor/VLDLR that mediate the cellular uptake of the APOE-containing lipoprotein particles. Finally, APOE also has a heparin-binding activity and binds heparan-sulfate proteoglycans on the surface of cells, a property that supports the capture and the receptor-mediated uptake of APOE-containing lipoproteins by cells. In Physeter macrocephalus (Sperm whale), this protein is Apolipoprotein E (APOE).